The sequence spans 880 residues: DNA mismatch repair protein MutS (880 aa).

635–642 (GPNMGGKS) is a binding site for ATP.

This sequence belongs to the DNA mismatch repair MutS family.

In terms of biological role, this protein is involved in the repair of mismatches in DNA. It is possible that it carries out the mismatch recognition step. This protein has a weak ATPase activity. The protein is DNA mismatch repair protein MutS of Nitrosomonas eutropha (strain DSM 101675 / C91 / Nm57).